The chain runs to 405 residues: DNA primase DnaG (405 aa).

Residues 172–248 (DSIIVVEGRA…HIDYIARAPP (77 aa)) form the Toprim domain. Residues Glu178, Asp222, and Asp224 each contribute to the Mg(2+) site. A disordered region spans residues 279–302 (AAGEKTESQMSPQQPQLTQTQPTT). Over residues 290 to 302 (PQQPQLTQTQPTT) the composition is skewed to low complexity.

It belongs to the archaeal DnaG primase family. In terms of assembly, forms a ternary complex with MCM helicase and DNA. Component of the archaeal exosome complex. Requires Mg(2+) as cofactor.

The catalysed reaction is ssDNA + n NTP = ssDNA/pppN(pN)n-1 hybrid + (n-1) diphosphate.. RNA polymerase that catalyzes the synthesis of short RNA molecules used as primers for DNA polymerase during DNA replication. Also part of the exosome, which is a complex involved in RNA degradation. Acts as a poly(A)-binding protein that enhances the interaction between heteromeric, adenine-rich transcripts and the exosome. The chain is DNA primase DnaG from Pyrobaculum islandicum (strain DSM 4184 / JCM 9189 / GEO3).